Reading from the N-terminus, the 485-residue chain is Delta(14)-sterol reductase (485 aa).

Transmembrane regions (helical) follow at residues 18 to 38 (FFGP…VYVF), 77 to 97 (GLVS…SLIL), 131 to 151 (LAIL…WTFI), 155 to 175 (FIQI…FVYV), and 319 to 339 (SLGP…FYIF). NADP(+)-binding positions include lysine 346, arginine 350, leucine 373, tryptophan 378, and 385–386 (NY). A helical membrane pass occupies residues 431-451 (AKGWGMLITYFYILYFAILLI). NADP(+)-binding positions include aspartate 457, 461–465 (CHRKY), and tyrosine 472.

This sequence belongs to the ERG4/ERG24 family.

It localises to the membrane. It carries out the reaction 4,4-dimethyl-5alpha-cholesta-8,24-dien-3beta-ol + NADP(+) = 4,4-dimethyl-5alpha-cholesta-8,14,24-trien-3beta-ol + NADPH + H(+). It functions in the pathway steroid biosynthesis; zymosterol biosynthesis; zymosterol from lanosterol: step 2/6. Functionally, reduces the C14=C15 double bond of 4,4-dimethyl-cholesta-8,14,24-trienol to produce 4,4-dimethyl-cholesta-8,24-dienol. This chain is Delta(14)-sterol reductase, found in Fusarium vanettenii (Neocosmospora pisi).